Here is a 362-residue protein sequence, read N- to C-terminus: Divinyl chlorophyll a/b light-harvesting protein PcbF (362 aa).

Helical transmembrane passes span 27–47 (FIGS…ANTL), 89–109 (IAFI…AGLL), 150–170 (FILG…VEWA), 211–231 (VMGG…FHIA), 251–271 (AVLS…AFWC), and 316–336 (LANV…WHAI).

This sequence belongs to the PsbB/PsbC family. IsiA/Pcb subfamily. In terms of assembly, the antenna complex consists of divinyl chlorophylls (a and b) and divinyl chlorophyll a/b binding proteins and binds more divinyl chlorophyll b than does the antenna complex from high-light-adapted Prochlorococcus. Divinyl chlorophyll a serves as cofactor. Requires divinyl chlorophyll b as cofactor.

It localises to the cellular thylakoid membrane. Functionally, the antenna complex functions as a light receptor, it captures and delivers excitation energy to photosystems II and I. The Prochlorales pcb genes are not related to higher plant LHCs. The sequence is that of Divinyl chlorophyll a/b light-harvesting protein PcbF (pcbF) from Prochlorococcus marinus (strain NATL2A).